The primary structure comprises 218 residues: 7-cyano-7-deazaguanine synthase 1 (218 aa).

9–19 (YSGGMDSFTVL) is a binding site for ATP. 4 residues coordinate Zn(2+): Cys185, Cys193, Cys196, and Cys199.

The protein belongs to the QueC family. The cofactor is Zn(2+).

The enzyme catalyses 7-carboxy-7-deazaguanine + NH4(+) + ATP = 7-cyano-7-deazaguanine + ADP + phosphate + H2O + H(+). It functions in the pathway purine metabolism; 7-cyano-7-deazaguanine biosynthesis. Its function is as follows. Catalyzes the ATP-dependent conversion of 7-carboxy-7-deazaguanine (CDG) to 7-cyano-7-deazaguanine (preQ(0)). This Colwellia psychrerythraea (strain 34H / ATCC BAA-681) (Vibrio psychroerythus) protein is 7-cyano-7-deazaguanine synthase 1.